Here is a 143-residue protein sequence, read N- to C-terminus: Transcriptional regulator MraZ (143 aa).

SpoVT-AbrB domains follow at residues 5 to 47 (TYTP…PRAE) and 76 to 119 (TDEQ…DAQA).

Belongs to the MraZ family. Forms oligomers.

The protein localises to the cytoplasm. It localises to the nucleoid. This Mycobacterium avium (strain 104) protein is Transcriptional regulator MraZ.